Consider the following 113-residue polypeptide: Endoribonuclease SymE (113 aa).

Residues 29-74 (SRYPDYSRIPAITLKGQWLEAAGFATGTVVDVKVMEGCIVLTAQPP) enclose the SpoVT-AbrB domain.

Belongs to the SymE family.

The protein localises to the cytoplasm. Functionally, involved in the degradation and recycling of damaged RNA. It is itself a target for degradation by the ATP-dependent protease Lon. The sequence is that of Endoribonuclease SymE from Escherichia coli (strain 55989 / EAEC).